The primary structure comprises 154 residues: UPF0039 protein sll0451 (154 aa).

Residues 8-151 (QRFNDISGEA…EHISMIFRVP (144 aa)) form the N-acetyltransferase domain.

It belongs to the UPF0039 (ElaA) family.

This Synechocystis sp. (strain ATCC 27184 / PCC 6803 / Kazusa) protein is UPF0039 protein sll0451.